Consider the following 985-residue polypeptide: Invasin (985 aa).

A D1 region spans residues 494-594 (SVTVQQPQLT…RQSVDTHFVK (101 aa)). The Extracellular segment spans residues 494–985 (SVTVQQPQLT…LAFPLCALAI (492 aa)). 2 consecutive Big-1 domains span residues 503-594 (TLTA…HFVK) and 601-691 (KSTL…VNFT). Positions 595–694 (GTIAADKSTL…SVTVNFTADP (100 aa)) are D2. Positions 695–794 (IPDAGRSSFT…LQKKISLFPV (100 aa)) are D3. The D4 stretch occupies residues 795 to 886 (PTLTGILVNG…YSVSYRFYPN (92 aa)). Positions 795–985 (PTLTGILVNG…LAFPLCALAI (191 aa)) are integrin-binding. The tract at residues 887–985 (RWIYDGGTSL…LAFPLCALAI (99 aa)) is D5. Cys-906 and Cys-981 are joined by a disulfide.

The protein belongs to the intimin/invasin family.

The protein localises to the cell surface. Invasin is a protein that allows enteric bacteria to penetrate cultured mammalian cells. The entry of invasin in the cell is mediated by binding several beta-1 chain integrins. This Yersinia pseudotuberculosis serotype I (strain IP32953) protein is Invasin.